The sequence spans 525 residues: GMP synthase [glutamine-hydrolyzing] (525 aa).

The 199-residue stretch at 9-207 (RILILDFGSQ…VHEICGCPAD (199 aa)) folds into the Glutamine amidotransferase type-1 domain. The active-site Nucleophile is Cys86. Catalysis depends on residues His181 and Glu183. One can recognise a GMPS ATP-PPase domain in the interval 208–400 (WTPGNIVDDL…LGLPADMVYR (193 aa)). ATP is bound at residue 235-241 (SGGVDSS).

As to quaternary structure, homodimer.

It catalyses the reaction XMP + L-glutamine + ATP + H2O = GMP + L-glutamate + AMP + diphosphate + 2 H(+). Its pathway is purine metabolism; GMP biosynthesis; GMP from XMP (L-Gln route): step 1/1. In terms of biological role, catalyzes the synthesis of GMP from XMP. In Alkalilimnicola ehrlichii (strain ATCC BAA-1101 / DSM 17681 / MLHE-1), this protein is GMP synthase [glutamine-hydrolyzing].